The chain runs to 50 residues: Thrombin-like enzyme BpirSP27 (50 aa).

A Peptidase S1 domain is found at 1–50; it reads VVGGDECNINEHRSLVAIFNSTGFFCSGILLNQEWVLTASHCDSTNFQMK. Asn-20 is a glycosylation site (N-linked (GlcNAc...) asparagine). Cys-26 and Cys-42 form a disulfide bridge. His-41 functions as the Charge relay system in the catalytic mechanism.

Belongs to the peptidase S1 family. Snake venom subfamily. In terms of assembly, monomer. In terms of processing, N-glycosylated. Expressed by the venom gland.

Its subcellular location is the secreted. Its activity is regulated as follows. Inhibited by serine protease inhibitors PMSF, benzamidine, leupeptin and aprotinin, as well as by copper (Cu2+) and manganese (Mn2+) ions. Not inhibited by metalloprotease inhibitors EDTA, EGTA and 1,10-phenanthroline, as well as by barium (Ba2+) and calcium ion (Ca2+). In terms of biological role, snake venom serine protease that interferes with the hemostatic system of the prey. It preferentially degrades the Bbeta chain (FGB) of fibrinogen, with minor effects on the Aalpha chain (FGA). It presents a lower ability to degrade fibrin clots than BpirSP41. It hydrolyzes chromogenic substrates S-2238 (used for testing thrombin activity), S-2222 (factor Xa), S-2266 (glandular kallikrein and factor XIa), S-2302 (plasma kallikrein, factor XIa and XIIa), and S-2251 (plasmin). It shows a decrease in the clotting time of human plasma in the presence of increasing doses of the enzyme. Its minimum coagulant dose (MCD) is 3.5 ug. It also promotes platelet aggregation in a concentration-dependent manner in the presence or absence of calcium. It also shows 20% inhibition of the hemolytic activity promoted by the complement pathways and possess only a minor role in the induction of edema and pain in rat. The sequence is that of Thrombin-like enzyme BpirSP27 from Bothrops pirajai (Piraja's lancehead).